The sequence spans 318 residues: Pantothenate kinase (318 aa).

96-103 (GSVAVGKS) provides a ligand contact to ATP.

It belongs to the prokaryotic pantothenate kinase family.

The protein resides in the cytoplasm. The catalysed reaction is (R)-pantothenate + ATP = (R)-4'-phosphopantothenate + ADP + H(+). It participates in cofactor biosynthesis; coenzyme A biosynthesis; CoA from (R)-pantothenate: step 1/5. The sequence is that of Pantothenate kinase from Coxiella burnetii (strain RSA 493 / Nine Mile phase I).